A 73-amino-acid polypeptide reads, in one-letter code: Ocellatin-PT6 (73 aa).

The signal sequence occupies residues 1–22 (MAFLKKSLFLVLFLGLVSLSIC). Residues 23–39 (DEEKRQDEDDDDDDDEE) constitute a propeptide that is removed on maturation.

In terms of tissue distribution, expressed by the skin glands.

The protein resides in the secreted. Its function is as follows. Has antibacterial activity against Gram-negative bacterium E.coli ATCC 25922 (MIC=120 uM) but not against S.pneumoniae ATCC 700603, S.choleraesuis ATCC 14028 or against Gram-positive bacterium S.aureus ATCC 29313. Shows no hemolytic activity and no cytotoxicity. This Leptodactylus pustulatus (Ceara white-lipped frog) protein is Ocellatin-PT6.